Here is an 89-residue protein sequence, read N- to C-terminus: Small ribosomal subunit protein uS19 (89 aa).

This sequence belongs to the universal ribosomal protein uS19 family.

Its function is as follows. Protein S19 forms a complex with S13 that binds strongly to the 16S ribosomal RNA. This is Small ribosomal subunit protein uS19 from Vesicomyosocius okutanii subsp. Calyptogena okutanii (strain HA).